We begin with the raw amino-acid sequence, 124 residues long: Small ribosomal subunit protein uS12 (124 aa).

D89 carries the post-translational modification 3-methylthioaspartic acid.

This sequence belongs to the universal ribosomal protein uS12 family. Part of the 30S ribosomal subunit. Contacts proteins S8 and S17. May interact with IF1 in the 30S initiation complex.

With S4 and S5 plays an important role in translational accuracy. Its function is as follows. Interacts with and stabilizes bases of the 16S rRNA that are involved in tRNA selection in the A site and with the mRNA backbone. Located at the interface of the 30S and 50S subunits, it traverses the body of the 30S subunit contacting proteins on the other side and probably holding the rRNA structure together. The combined cluster of proteins S8, S12 and S17 appears to hold together the shoulder and platform of the 30S subunit. This Yersinia enterocolitica serotype O:8 / biotype 1B (strain NCTC 13174 / 8081) protein is Small ribosomal subunit protein uS12.